The primary structure comprises 561 residues: Oxygen-dependent choline dehydrogenase (561 aa).

Position 6-35 (6-35) interacts with FAD; that stretch reads DYIIIGAGSAGNVLATRLTEDADVSVLLLE. The Proton acceptor role is filled by His-475.

The protein belongs to the GMC oxidoreductase family. FAD is required as a cofactor.

It carries out the reaction choline + A = betaine aldehyde + AH2. The catalysed reaction is betaine aldehyde + NAD(+) + H2O = glycine betaine + NADH + 2 H(+). Its pathway is amine and polyamine biosynthesis; betaine biosynthesis via choline pathway; betaine aldehyde from choline (cytochrome c reductase route): step 1/1. Its function is as follows. Involved in the biosynthesis of the osmoprotectant glycine betaine. Catalyzes the oxidation of choline to betaine aldehyde and betaine aldehyde to glycine betaine at the same rate. The chain is Oxygen-dependent choline dehydrogenase from Pseudomonas aeruginosa (strain UCBPP-PA14).